The primary structure comprises 617 residues: Ceramide transfer protein (617 aa).

Polar residues predominate over residues 1–11 (MSDNQSWNSSG). The disordered stretch occupies residues 1 to 23 (MSDNQSWNSSGSEEDLETESGPP). Residues 23–117 (PVERCGVLSK…WIDSIEQHKS (95 aa)) form the PH domain. A coiled-coil region spans residues 268-302 (REDSWQKRLDKEIEKRRRVEEAYKNAMTELKKKSH). The short motif at 320–326 (EFFDAVE) is the FFAT element. Over residues 332 to 344 (QDKIEQSQSEKGR) the composition is skewed to basic and acidic residues. The interval 332 to 355 (QDKIEQSQSEKGRSHWPSSLPSTE) is disordered. The region spanning 383-611 (DEHRFRIQVE…FTSYVQEKTA (229 aa)) is the START domain. An N-acylsphing-4-enine is bound by residues glutamate 466, glutamine 487, asparagine 524, and tyrosine 572.

It localises to the cytoplasm. Its subcellular location is the golgi apparatus. It is found in the endoplasmic reticulum. It carries out the reaction N-hexadecanoylsphing-4-enine(in) = N-hexadecanoylsphing-4-enine(out). Its function is as follows. May mediate the intracellular trafficking of ceramide in a non-vesicular manner. The chain is Ceramide transfer protein (cert1) from Xenopus tropicalis (Western clawed frog).